The sequence spans 97 residues: Putative septation protein SpoVG (97 aa).

The protein belongs to the SpoVG family.

In terms of biological role, could be involved in septation. This is Putative septation protein SpoVG from Borreliella afzelii (strain PKo) (Borrelia afzelii).